The following is a 270-amino-acid chain: Proteasome subunit alpha (270 aa).

Positions 229-270 are disordered; sequence LLDTEAAGSTPTDAPSDTEDGDSTDGTDRADGTTDSTEETEK. Over residues 244–253 the composition is skewed to acidic residues; sequence SDTEDGDSTD.

It belongs to the peptidase T1A family. In terms of assembly, the 20S proteasome core is composed of 14 alpha and 14 beta subunits that assemble into four stacked heptameric rings, resulting in a barrel-shaped structure. The two inner rings, each composed of seven catalytic beta subunits, are sandwiched by two outer rings, each composed of seven alpha subunits. The catalytic chamber with the active sites is on the inside of the barrel. Has a gated structure, the ends of the cylinder being occluded by the N-termini of the alpha-subunits. Is capped by the proteasome-associated ATPase, ARC.

Its subcellular location is the cytoplasm. It participates in protein degradation; proteasomal Pup-dependent pathway. With respect to regulation, the formation of the proteasomal ATPase ARC-20S proteasome complex, likely via the docking of the C-termini of ARC into the intersubunit pockets in the alpha-rings, may trigger opening of the gate for substrate entry. Interconversion between the open-gate and close-gate conformations leads to a dynamic regulation of the 20S proteasome proteolysis activity. Its function is as follows. Component of the proteasome core, a large protease complex with broad specificity involved in protein degradation. The polypeptide is Proteasome subunit alpha (Streptomyces griseus subsp. griseus (strain JCM 4626 / CBS 651.72 / NBRC 13350 / KCC S-0626 / ISP 5235)).